The primary structure comprises 294 residues: Large ribosomal subunit protein uL4m (294 aa).

The segment at 120-139 (VRGGGRKPWQQKGSGRARHG) is disordered. The residue at position 147 (Arg-147) is an Omega-N-methylarginine.

The protein belongs to the universal ribosomal protein uL4 family. Component of the mitochondrial ribosome large subunit (39S) which comprises a 16S rRNA and about 50 distinct proteins. Interacts with MIEF1 upstream open reading frame protein.

The protein localises to the mitochondrion. The protein is Large ribosomal subunit protein uL4m (MRPL4) of Bos taurus (Bovine).